Reading from the N-terminus, the 1413-residue chain is DNA-directed RNA polymerase subunit beta' (1413 aa).

C70, C72, C85, and C88 together coordinate Zn(2+). Residues D460, D462, and D464 each contribute to the Mg(2+) site. Positions 819, 893, 900, and 903 each coordinate Zn(2+).

Belongs to the RNA polymerase beta' chain family. As to quaternary structure, the RNAP catalytic core consists of 2 alpha, 1 beta, 1 beta' and 1 omega subunit. When a sigma factor is associated with the core the holoenzyme is formed, which can initiate transcription. Requires Mg(2+) as cofactor. The cofactor is Zn(2+).

The enzyme catalyses RNA(n) + a ribonucleoside 5'-triphosphate = RNA(n+1) + diphosphate. In terms of biological role, DNA-dependent RNA polymerase catalyzes the transcription of DNA into RNA using the four ribonucleoside triphosphates as substrates. This chain is DNA-directed RNA polymerase subunit beta', found in Burkholderia multivorans (strain ATCC 17616 / 249).